The chain runs to 78 residues: Large ribosomal subunit protein bL28 (78 aa).

The segment at methionine 1 to lysine 24 is disordered.

It belongs to the bacterial ribosomal protein bL28 family.

This is Large ribosomal subunit protein bL28 from Nitrosococcus oceani (strain ATCC 19707 / BCRC 17464 / JCM 30415 / NCIMB 11848 / C-107).